A 636-amino-acid polypeptide reads, in one-letter code: Epithelial sodium channel subunit alpha (636 aa).

The interval 1–28 is disordered; it reads MKSENQPEDKRIGKLKREANMQKMKEAA. Over 1–77 the chain is Cytoplasmic; sequence MKSENQPEDK…VCSKKNRMKT (77 aa). Residues 78 to 98 form a helical membrane-spanning segment; it reads AFWSILFFFTFGLMYWQFGII. Residues 99–549 lie on the Extracellular side of the membrane; sequence YREYFSFPVN…SQWSLWFGSS (451 aa). 10 disulfides stabilise this stretch: cysteine 126/cysteine 293, cysteine 218/cysteine 225, cysteine 270/cysteine 277, cysteine 381/cysteine 466, cysteine 403/cysteine 443, cysteine 403/cysteine 462, cysteine 407/cysteine 458, cysteine 416/cysteine 443, cysteine 416/cysteine 466, and cysteine 418/cysteine 432. The helical transmembrane segment at 550–570 threads the bilayer; the sequence is VLSVVELVELILDFIAITCIL. The Cytoplasmic segment spans residues 571–636; sequence AIHWLNMNRS…LRRVSSQQTE (66 aa).

It belongs to the amiloride-sensitive sodium channel (TC 1.A.6) family. SCNN1A subfamily. As to quaternary structure, heterotrimer; containing an alpha/SCNN1A, a beta/SCNN1B and a gamma/SCNN1G subunit.

It localises to the apical cell membrane. Its subcellular location is the cell projection. The protein localises to the cilium. It is found in the cytoplasmic granule. The protein resides in the cytoplasm. It localises to the cytoplasmic vesicle. Its subcellular location is the secretory vesicle. The protein localises to the acrosome. It is found in the flagellum. It catalyses the reaction Na(+)(in) = Na(+)(out). Originally identified and characterized by its inhibition by the diuretic drug amiloride. Functionally, this is one of the three pore-forming subunits of the heterotrimeric epithelial sodium channel (ENaC), a critical regulator of sodium balance and fluid homeostasis. ENaC operates in epithelial tissues, where it mediates the electrodiffusion of sodium ions from extracellular fluid through the apical membrane of cells, with water following osmotically. This Anolis carolinensis (Green anole) protein is Epithelial sodium channel subunit alpha.